Consider the following 506-residue polypeptide: MPMSSRDRDLHPGHHHFGSCSPLSQLWPGPEPKSVKGLYYSRARKVGNQDASPEANLKEILVNVGGQRYLLPWSTLDAFPLSRLSRLRLCRSHEEITQLCDDYDEDSQEFFFDRNPSAFGVIVSFLAAGKLVLLREMCALSFREELSYWGIEETNLERCCLRKLLKKLEEAAELRREEAAQRQQQRQACHSEVQASRWARSMNQLREMVEDPQSGLPGKVFACLSVLFVATTAVSLCVSTMPDFRAEEGKGECTRKCYYIFVVESICVAWFSLEFCLRFVQAPNKCQFFRGPLNVIDILAISPYYVSLAVSDESPEAGERPSSSSYLEKVGLVLRVLRALRILYVMRLARHSLGLQTLGLTVRRCAREFGLLMLFLAVAVTLFSPLVYVAENESGRVLEFTSIPASYWWAIISMTTVGYGDMVPRSVPGQMVALSSILSGILIMAFPATSIFHTFSHSYLELKREQEQVQARLRRLQNTNSASERELLSDVDDLVPEGLTSPGRYM.

Over 1-216 (MPMSSRDRDL…EMVEDPQSGL (216 aa)) the chain is Cytoplasmic. A helical membrane pass occupies residues 217 to 238 (PGKVFACLSVLFVATTAVSLCV). At 239 to 259 (STMPDFRAEEGKGECTRKCYY) the chain is on the extracellular side. The helical transmembrane segment at 260 to 281 (IFVVESICVAWFSLEFCLRFVQ) threads the bilayer. Residues 282–292 (APNKCQFFRGP) lie on the Cytoplasmic side of the membrane. The chain crosses the membrane as a helical span at residues 293–312 (LNVIDILAISPYYVSLAVSD). The Extracellular portion of the chain corresponds to 313-326 (ESPEAGERPSSSSY). A helical; Voltage-sensor transmembrane segment spans residues 327–351 (LEKVGLVLRVLRALRILYVMRLARH). The Cytoplasmic portion of the chain corresponds to 352 to 366 (SLGLQTLGLTVRRCA). The chain crosses the membrane as a helical span at residues 367–388 (REFGLLMLFLAVAVTLFSPLVY). Residues 389–403 (VAENESGRVLEFTSI) lie on the Extracellular side of the membrane. The segment at residues 404–415 (PASYWWAIISMT) is an intramembrane region (helical). Residues 416 to 421 (TVGYGD) carry the Selectivity filter motif. An intramembrane segment occupies 416–423 (TVGYGDMV). The Extracellular segment spans residues 424–430 (PRSVPGQ). The helical transmembrane segment at 431-459 (MVALSSILSGILIMAFPATSIFHTFSHSY) threads the bilayer. At 460–506 (LELKREQEQVQARLRRLQNTNSASERELLSDVDDLVPEGLTSPGRYM) the chain is on the cytoplasmic side.

This sequence belongs to the potassium channel family. G (TC 1.A.1.2) subfamily. Kv6.4/KCNG4 sub-subfamily. In terms of assembly, heterotetramer with KCNB1. Does not form homomultimer.

It is found in the cell membrane. Regulatory subunit of the voltage-gated potassium (Kv) channel which, when coassembled with KCNB1, modulates the kinetics parameters of the heterotetrameric channel namely the time course of activation, deactivation and inactivation and on the voltage-dependence of activation. Potassium channel subunit that does not form functional channels by itself. Reduces the deactivation rate. Modulates the threshold for activation by shifting by approximately 20 mV in hyperpolarizing direction. Markedly changes the inactivation by shifting the voltage dependence of inactivation by approximately 40 mV in hyperpolarizing direction. Acceleratee activation and enhances the time course of activation. The sequence is that of Voltage-gated potassium channel regulatory subunit KCNG4 from Mus musculus (Mouse).